The following is a 388-amino-acid chain: Succinyl-diaminopimelate desuccinylase (388 aa).

Residue H84 coordinates Zn(2+). Residue D86 is part of the active site. D115 provides a ligand contact to Zn(2+). The Proton acceptor role is filled by E146. Residues E147, E175, and H360 each coordinate Zn(2+).

Belongs to the peptidase M20A family. DapE subfamily. As to quaternary structure, homodimer. The cofactor is Zn(2+). Co(2+) is required as a cofactor.

The catalysed reaction is N-succinyl-(2S,6S)-2,6-diaminopimelate + H2O = (2S,6S)-2,6-diaminopimelate + succinate. It participates in amino-acid biosynthesis; L-lysine biosynthesis via DAP pathway; LL-2,6-diaminopimelate from (S)-tetrahydrodipicolinate (succinylase route): step 3/3. In terms of biological role, catalyzes the hydrolysis of N-succinyl-L,L-diaminopimelic acid (SDAP), forming succinate and LL-2,6-diaminopimelate (DAP), an intermediate involved in the bacterial biosynthesis of lysine and meso-diaminopimelic acid, an essential component of bacterial cell walls. The polypeptide is Succinyl-diaminopimelate desuccinylase (Helicobacter pylori (strain J99 / ATCC 700824) (Campylobacter pylori J99)).